The primary structure comprises 131 residues: Protein FAM107B (131 aa).

Residue A2 is modified to N-acetylalanine. 2 disordered regions span residues 39 to 78 (MNQK…KKKS) and 100 to 131 (KLQE…AQES). At K50 the chain carries N6-acetyllysine. Residues 52-78 (ELQKVMEKRKRDQVIKQKEEEAQKKKS) show a composition bias toward basic and acidic residues. The stretch at 61-112 (KRDQVIKQKEEEAQKKKSDLEIELLKRQQKLEQLELEKQKLQEEQENAPEFV) forms a coiled coil.

Belongs to the FAM107 family.

This chain is Protein FAM107B, found in Homo sapiens (Human).